The sequence spans 391 residues: Tryptophan synthase beta chain (391 aa).

Lys84 is modified (N6-(pyridoxal phosphate)lysine).

It belongs to the TrpB family. Tetramer of two alpha and two beta chains. Pyridoxal 5'-phosphate is required as a cofactor.

It carries out the reaction (1S,2R)-1-C-(indol-3-yl)glycerol 3-phosphate + L-serine = D-glyceraldehyde 3-phosphate + L-tryptophan + H2O. It participates in amino-acid biosynthesis; L-tryptophan biosynthesis; L-tryptophan from chorismate: step 5/5. In terms of biological role, the beta subunit is responsible for the synthesis of L-tryptophan from indole and L-serine. The chain is Tryptophan synthase beta chain from Thermoanaerobacter pseudethanolicus (strain ATCC 33223 / 39E) (Clostridium thermohydrosulfuricum).